The chain runs to 357 residues: 3-isopropylmalate dehydrogenase (357 aa).

Residue G77 to E90 coordinates NAD(+). Substrate is bound by residues R97, R107, R136, and D224. Residues D224, D248, and D252 each contribute to the Mg(2+) site. G282–N294 contacts NAD(+).

It belongs to the isocitrate and isopropylmalate dehydrogenases family. LeuB type 1 subfamily. In terms of assembly, homodimer. The cofactor is Mg(2+). Requires Mn(2+) as cofactor.

Its subcellular location is the cytoplasm. It catalyses the reaction (2R,3S)-3-isopropylmalate + NAD(+) = 4-methyl-2-oxopentanoate + CO2 + NADH. It functions in the pathway amino-acid biosynthesis; L-leucine biosynthesis; L-leucine from 3-methyl-2-oxobutanoate: step 3/4. Catalyzes the oxidation of 3-carboxy-2-hydroxy-4-methylpentanoate (3-isopropylmalate) to 3-carboxy-4-methyl-2-oxopentanoate. The product decarboxylates to 4-methyl-2 oxopentanoate. The sequence is that of 3-isopropylmalate dehydrogenase from Clostridium acetobutylicum (strain ATCC 824 / DSM 792 / JCM 1419 / IAM 19013 / LMG 5710 / NBRC 13948 / NRRL B-527 / VKM B-1787 / 2291 / W).